Here is a 125-residue protein sequence, read N- to C-terminus: Prepro-urotensin II-gamma (125 aa).

The N-terminal stretch at 1-21 is a signal peptide; the sequence is MMCNLLLSCSVLLLSCSHLLA. A propeptide spanning residues 109–111 is cleaved from the precursor; it reads QFR. C119 and C124 are oxidised to a cystine.

This sequence belongs to the urotensin-2 family.

The protein resides in the secreted. In terms of biological role, urotensin is found in the teleost caudal neurosecretory system. It has a suggested role in osmoregulation and as a corticotropin-releasing factor. The non-hormonal portion of this precursor may be a urotensin binding protein, urophysin. The protein is Prepro-urotensin II-gamma of Cyprinus carpio (Common carp).